We begin with the raw amino-acid sequence, 436 residues long: Voltage-gated purine nucleotide uniporter SLC17A9 (436 aa).

Helical transmembrane passes span 64 to 84 (IVLS…GHLG), 92 to 112 (VILL…LLAH), 118 to 138 (LAFM…YFPA), 158 to 178 (IVGA…SLLL), 181 to 201 (YGWQ…VWYV), 239 to 259 (PAVW…FILL), 276 to 296 (WIFN…SGFL), 316 to 336 (GMGL…SSFC), 369 to 389 (GFLF…GVCL), and 402 to 422 (CLFN…LVFG).

It belongs to the major facilitator superfamily. Sodium/anion cotransporter family. As to expression, widely expressed, but more predominantly in adrenal gland, brain and thyroid.

It localises to the cytoplasmic vesicle. The protein localises to the secretory vesicle. It is found in the chromaffin granule membrane. Its subcellular location is the secretory vesicle membrane. The protein resides in the lysosome membrane. The enzyme catalyses ATP(in) = ATP(out). The catalysed reaction is ADP(in) = ADP(out). It catalyses the reaction GTP(in) = GTP(out). Its activity is regulated as follows. Activity is chloride-dependent. Inhibited by AMP-PNP, gammaS-ATP, diadenosine triphosphate, 4,4'- diisothiocyanatostilbene-2,2'-disulfonate (DIDS) and Evans blue. Functionally, voltage-gated ATP nucleotide uniporter that can also transport the purine nucleotides ADP and GTP. Uses the membrane potential as the driving force to control ATP accumulation in lysosomes and secretory vesicles. By controlling ATP storage in lysosomes, regulates ATP-dependent proteins of these organelles. Also indirectly regulates the exocytosis of ATP through its import into lysosomes in astrocytes and secretory vesicles such as adrenal chromaffin granules, mucin granules and synaptic vesicles. The chain is Voltage-gated purine nucleotide uniporter SLC17A9 from Homo sapiens (Human).